Here is a 179-residue protein sequence, read N- to C-terminus: MNRLKEKYNKEISPALMTKFNYDSVMQVPKIEKIVINMGVGDAVQNAKAIDSAVEELTFIAGQKPVVTRAKKSIAGFRLREGMPIGAKVTLRGERMYDFLDKLISVSLPRVRDFRGISKKSFDGRGNYTLGIKEQLIFPEIDYDKVTKVRGMDIVIVTTANSDEEARELLTQVGMPFQK.

Belongs to the universal ribosomal protein uL5 family. In terms of assembly, part of the 50S ribosomal subunit; part of the 5S rRNA/L5/L18/L25 subcomplex. Contacts the 5S rRNA and the P site tRNA. Forms a bridge to the 30S subunit in the 70S ribosome.

Its function is as follows. This is one of the proteins that bind and probably mediate the attachment of the 5S RNA into the large ribosomal subunit, where it forms part of the central protuberance. In the 70S ribosome it contacts protein S13 of the 30S subunit (bridge B1b), connecting the 2 subunits; this bridge is implicated in subunit movement. Contacts the P site tRNA; the 5S rRNA and some of its associated proteins might help stabilize positioning of ribosome-bound tRNAs. In Bacillus velezensis (strain DSM 23117 / BGSC 10A6 / LMG 26770 / FZB42) (Bacillus amyloliquefaciens subsp. plantarum), this protein is Large ribosomal subunit protein uL5.